A 702-amino-acid chain; its full sequence is Ribosomal RNA large subunit methyltransferase K/L (702 aa).

Positions leucine 43 to leucine 154 constitute a THUMP domain.

It belongs to the methyltransferase superfamily. RlmKL family.

Its subcellular location is the cytoplasm. The catalysed reaction is guanosine(2445) in 23S rRNA + S-adenosyl-L-methionine = N(2)-methylguanosine(2445) in 23S rRNA + S-adenosyl-L-homocysteine + H(+). It carries out the reaction guanosine(2069) in 23S rRNA + S-adenosyl-L-methionine = N(2)-methylguanosine(2069) in 23S rRNA + S-adenosyl-L-homocysteine + H(+). Its function is as follows. Specifically methylates the guanine in position 2445 (m2G2445) and the guanine in position 2069 (m7G2069) of 23S rRNA. This Enterobacter sp. (strain 638) protein is Ribosomal RNA large subunit methyltransferase K/L.